The sequence spans 504 residues: L-carnitine/gamma-butyrobetaine antiporter (504 aa).

Helical transmembrane passes span 10-30 (IEPKVFFPPLIIVGILCWLTV), 51-71 (WGWAFEWYMVVMLFGWFWLVF), 92-112 (IFMMFASCTSAAVLFWGSIEI), 143-163 (GPLPWATYSFLSVAFAYFFFV), 195-215 (FYLVALIFAMGTSLGLATPLV), 231-251 (LDAIIITCWIILNAICVACGL), 263-283 (SYLSFLMLGWVFIVSGASFIM), 316-336 (WTVFYWAWWVIYAIQMSIFLA), 347-367 (LCFGMVLGLTASTWILWTVLG), 398-418 (WAALPLSTATIWGFFILCFIA), 446-466 (LLVRIGWSILVGIIGIVLLAL), and 475-495 (AIIAGGCPLFFVNIMVTLSFI).

This sequence belongs to the BCCT transporter (TC 2.A.15) family. CaiT subfamily. In terms of assembly, homotrimer.

It localises to the cell inner membrane. It carries out the reaction 4-(trimethylamino)butanoate(in) + (R)-carnitine(out) = 4-(trimethylamino)butanoate(out) + (R)-carnitine(in). Its pathway is amine and polyamine metabolism; carnitine metabolism. Functionally, catalyzes the exchange of L-carnitine for gamma-butyrobetaine. This is L-carnitine/gamma-butyrobetaine antiporter from Escherichia coli O8 (strain IAI1).